Here is a 426-residue protein sequence, read N- to C-terminus: Amino acid transporter AVT1H (426 aa).

11 helical membrane-spanning segments follow: residues 34 to 54, 55 to 75, 110 to 130, 148 to 168, 182 to 202, 215 to 235, 248 to 268, 292 to 312, 340 to 360, 363 to 383, and 392 to 412; these read SFLHSVINMVGMLIGLGQLSM, PYAVESGGWMSIFLLISFGIL, LIVCLFIYLEIFMALVSYTIS, HFPAAKLTAVAVAIALPSLWI, ILMSAIIFGSVVYTAIFGGVI, IPTVSGIYLFSFGGHIVFPNL, VSIVSFATVTALYGALAITGA, IALWATVLTPMTKYALEFAPL, LLLVILALALTVPYFGYVLSL, SLVSVTIAVTLPSAFYLKICW, and AANLGFVVLGCVLGVLGSFES.

Belongs to the amino acid/polyamine transporter 2 family. Amino acid/auxin permease (AAAP) (TC 2.A.18.5) subfamily.

It localises to the membrane. The protein is Amino acid transporter AVT1H of Arabidopsis thaliana (Mouse-ear cress).